A 364-amino-acid polypeptide reads, in one-letter code: Probable cysteine protease RDL4 (364 aa).

An N-terminal signal peptide occupies residues 1 to 23; sequence MGSAKSAMLILLVAMVIASCATA. Positions 24–136 are cleaved as a propeptide — activation peptide; sequence IDMSVVSYDD…DRYKTSADDV (113 aa). The N-linked (GlcNAc...) asparagine glycan is linked to Asn87. 3 disulfide bridges follow: Cys158-Cys199, Cys192-Cys232, and Cys291-Cys342. Residue Cys161 is part of the active site. Active-site residues include His297 and Asn317.

This sequence belongs to the peptidase C1 family. As to expression, expressed in inflorescences.

Its function is as follows. Probable thiol protease. The polypeptide is Probable cysteine protease RDL4 (Arabidopsis thaliana (Mouse-ear cress)).